Consider the following 97-residue polypeptide: Mitochondrial import inner membrane translocase subunit Tim8 A (97 aa).

A Twin CX3C motif motif is present at residues 43-66 (CWEKCMDKPGPKLDSRAEACFVNC). 2 disulfides stabilise this stretch: Cys43-Cys66 and Cys47-Cys62. A phosphoserine mark is found at Ser57, Ser87, Ser94, and Ser96.

It belongs to the small Tim family. As to quaternary structure, heterohexamer; composed of 3 copies of TIMM8A and 3 copies of TIMM13, named soluble 70 kDa complex. Associates with the TIM22 complex, whose core is composed of TIMM22.

The protein resides in the mitochondrion inner membrane. Its function is as follows. Mitochondrial intermembrane chaperone that participates in the import and insertion of some multi-pass transmembrane proteins into the mitochondrial inner membrane. Also required for the transfer of beta-barrel precursors from the TOM complex to the sorting and assembly machinery (SAM complex) of the outer membrane. Acts as a chaperone-like protein that protects the hydrophobic precursors from aggregation and guide them through the mitochondrial intermembrane space. The TIMM8-TIMM13 complex mediates the import of proteins such as TIMM23, SLC25A12/ARALAR1 and SLC25A13/ARALAR2, while the predominant TIMM9-TIMM10 70 kDa complex mediates the import of much more proteins. This Rattus norvegicus (Rat) protein is Mitochondrial import inner membrane translocase subunit Tim8 A (Timm8a).